Here is a 357-residue protein sequence, read N- to C-terminus: O-methyltransferase 1, chloroplastic (357 aa).

The N-terminal 53 residues, 1 to 53 (MPVLPWLAAAATTPVRRSPPLPATPRALLRLPASSFPPWSNCAKSGLPPRGPF), are a transit peptide targeting the chloroplast. Residues 50 to 71 (RGPFATAADTPLGGSLPEPEEE) are disordered.

This sequence belongs to the methyltransferase superfamily. LCMT family. As to expression, expressed in roots, leaf sheaths, flag leaves and panicles.

Its subcellular location is the plastid. The protein localises to the chloroplast. The enzyme catalyses N-acetylserotonin + S-adenosyl-L-methionine = melatonin + S-adenosyl-L-homocysteine + H(+). It functions in the pathway aromatic compound metabolism; melatonin biosynthesis; melatonin from serotonin: step 1/2. Functionally, involved in melatonin biosynthesis. Can function as acetylserotonin O-methyltransferase. Catalyzes the transfer of a methyl group onto N-acetylserotonin, producing melatonin (N-acetyl-5-methoxytryptamine). Involved in the regulation of jasmonate- and brassinosteroid-mediated plant growth and defense responses. The polypeptide is O-methyltransferase 1, chloroplastic (Oryza sativa subsp. japonica (Rice)).